An 87-amino-acid polypeptide reads, in one-letter code: Small ribosomal subunit protein uS17 (87 aa).

Belongs to the universal ribosomal protein uS17 family. In terms of assembly, part of the 30S ribosomal subunit.

Its function is as follows. One of the primary rRNA binding proteins, it binds specifically to the 5'-end of 16S ribosomal RNA. The sequence is that of Small ribosomal subunit protein uS17 from Bacillus mycoides (strain KBAB4) (Bacillus weihenstephanensis).